The sequence spans 1305 residues: Serine protease EspC (1305 aa).

A signal peptide spans 1-53 (MNKIYALKYCHATGGLIAVSELASRVMKKAARGSLLALFNLSLYGAFLSASQA). A Peptidase S6 domain is found at 55 to 297 (QLNIDNVWAR…SILNQYDENT (243 aa)). Residues His125, Asp153, and Ser256 each act as charge relay system in the active site. Residues 1039–1305 (DTQGDAGVWA…AINANFRYSF (267 aa)) enclose the Autotransporter domain.

In terms of processing, cleaved to release the mature protein from the outer membrane.

The protein resides in the periplasm. Its subcellular location is the secreted. The protein localises to the cell surface. It localises to the cell outer membrane. With respect to regulation, inhibition of cytotoxic activity by phenylmethylsulfonyl fluoride. In terms of biological role, serine protease with enterotoxic and cytotoxic activities. Cleaves fodrin, but does not cause its redistribution within epithelial cells. The exact role of EspC in EPEC pathogenesis is still unknown. In Escherichia coli O127:H6 (strain E2348/69 / EPEC), this protein is Serine protease EspC (espC).